The chain runs to 939 residues: MDYRDSLNLPKTNFKMKANLAQREPMILKRWEKEGLYQMLQERAQDRPLFVLHDGPPYANGHIHLGHAFNKILKDIILRSKRASGFNAPYVPGWDCHGLPIEHNVDKELGEEKKKTIPILAKRAACRKYANKWIKTQKPEFKRLGVLGDWEDPYLTINYSYEAAIAREFNKFLLSGSVVRNRKPVYWCSTCTTALAEAEVEYHDHTSPSIYVKFPVIEDFSDVDPALAGDKTFVVIWTTTPWTLPSNTAVAFHPKFQYAAVAVGEETWVLAEDLVEKFMQEVGIEDYSIKSTFTAEKLENRNCRHPFMDRDSRLVFADYVTTEAGTGCVHTAPGHGADDYATGLRYGLEVLSPVDGDGIYTKEAGPYAGRQVPEVNSDIIADLAESGLLVFKKDINHSYPHCWRCRKPVMYRATPQWFISMENNDLRKKALKNIESVSWTPSWGMNRIHSMVESRPDWCLSRQRTWGVPLTVISCKDCGEVVKSEEVVAKIDELFLKEGADAWFSHPVEDFLPEGHVCTCGCATFIKEEDILDVWFDSGSSFAAVCELRDDLVAPADLYLEGSDQHRGWFQSSLITATGTRGYAPFKGVLTHGYVVDGQGKKMSKSVGNVVAPQEVIDEYGAEILRLWVSSEDYRDDVKVSKEILKQVSDSYRKIRNTIRYFLGNLNDFDPSKDRIAVSEMSELDRWALARFEELRAKITESYDKYEFHAINQSLNYFCGTTMSAFYLDIIKDRLYVEGTDSTIRRASQTVLYDILDGLLRLMSPVLSFTAADAWNALYSLGEKDSLEKSVFFADFPVAIDPQFDAEQEARWQRLIKIRSELTKALELARRDKVIGHSLEAEVLVKGEGELGEFIHAEWQHLREISIVSAMSEIEGAPEESAYVSEEVEGLVVSVKLAPGVKCDRCWIRSTTVGDSVEHPQLCSRCLAIVEDMDLEMDA.

Residues 57-67 (PYANGHIHLGH) carry the 'HIGH' region motif. E561 is an L-isoleucyl-5'-AMP binding site. The 'KMSKS' region motif lies at 602-606 (KMSKS). K605 provides a ligand contact to ATP. Zn(2+) is bound by residues C903, C906, C923, and C926.

This sequence belongs to the class-I aminoacyl-tRNA synthetase family. IleS type 1 subfamily. Monomer. It depends on Zn(2+) as a cofactor.

The protein resides in the cytoplasm. The enzyme catalyses tRNA(Ile) + L-isoleucine + ATP = L-isoleucyl-tRNA(Ile) + AMP + diphosphate. Functionally, catalyzes the attachment of isoleucine to tRNA(Ile). As IleRS can inadvertently accommodate and process structurally similar amino acids such as valine, to avoid such errors it has two additional distinct tRNA(Ile)-dependent editing activities. One activity is designated as 'pretransfer' editing and involves the hydrolysis of activated Val-AMP. The other activity is designated 'posttransfer' editing and involves deacylation of mischarged Val-tRNA(Ile). In Desulfotalea psychrophila (strain LSv54 / DSM 12343), this protein is Isoleucine--tRNA ligase.